The sequence spans 571 residues: Hemagglutinin-neuraminidase (571 aa).

Over 1–26 (MDRAVSRVALENEEREAKNTWRFVFR) the chain is Intravirion. A helical membrane pass occupies residues 27 to 47 (IAILLLIVITLAISAAALVYS). At 48 to 571 (MEASTPGDLV…LVEILKNDGV (524 aa)) the chain is on the virion surface side. N119 carries N-linked (GlcNAc...) asparagine; by host glycosylation. The segment at 124 to 152 (GAPVHDPDYIGGIGKELIVDDASDVTSFY) is important for interaction with fusion/F protein. 3 disulfides stabilise this stretch: C172/C196, C186/C247, and C238/C251. Positions 234-239 (NRKSCS) are involved in neuraminidase activity. N-linked (GlcNAc...) asparagine; by host glycosylation is found at N341 and N433. 2 disulfide bridges follow: C344/C461 and C455/C465. N-linked (GlcNAc...) asparagine; by host glycans are attached at residues N481, N508, and N538.

This sequence belongs to the paramyxoviruses hemagglutinin-neuraminidase family. Homotetramer; composed of disulfide-linked homodimers. Interacts with F protein trimer. Interacts with host CG-1B; this interaction inhibits viral adsorption and replication rather than internalization.

It is found in the virion membrane. The protein resides in the host cell membrane. It carries out the reaction Hydrolysis of alpha-(2-&gt;3)-, alpha-(2-&gt;6)-, alpha-(2-&gt;8)- glycosidic linkages of terminal sialic acid residues in oligosaccharides, glycoproteins, glycolipids, colominic acid and synthetic substrates.. Its function is as follows. Mediates the viral entry into the host cell together with fusion/F protein. Attaches the virus to sialic acid-containing cell receptors and thereby initiates infection. Binding of HN protein to the receptor induces a conformational change that allows the F protein to trigger virion/cell membranes fusion. In terms of biological role, neuraminidase activity ensures the efficient spread of the virus by dissociating the mature virions from the neuraminic acid containing glycoproteins. In Gallus gallus (Chicken), this protein is Hemagglutinin-neuraminidase (HN).